The chain runs to 280 residues: Borealin (280 aa).

Over residues 140-153 the composition is skewed to basic residues; the sequence is KVAAKKPSTARRTR. Residues 140–187 form a disordered region; sequence KVAAKKPSTARRTRASVGNVANTSKRTSKRGRATPSASKQAETSLLGY.

Belongs to the borealin family. As to quaternary structure, component of the CPC at least composed of survivin/birc5, incenp, cdca8/borealin and/or cdca9/dasra-A, and aurkb/aurora-B. Interacts with incenp (via N-terminus).

Its subcellular location is the nucleus. The protein resides in the chromosome. It localises to the centromere. The protein localises to the cytoplasm. It is found in the cytoskeleton. Its subcellular location is the spindle. Component of the chromosomal passenger complex (CPC), a complex that acts as a key regulator of mitosis. The CPC complex has essential functions at the centromere in ensuring correct chromosome alignment and segregation and is required for chromatin-induced microtubule stabilization and spindle assembly. Contributes to CPC function by facilitating loading of the CPC onto chromosomes. The polypeptide is Borealin (cdca8) (Xenopus laevis (African clawed frog)).